Here is a 492-residue protein sequence, read N- to C-terminus: V-type proton ATPase subunit B 1 (492 aa).

It belongs to the ATPase alpha/beta chains family. V-ATPase is a heteromultimeric enzyme composed of a peripheral catalytic V1 complex (main components: subunits A, B, C, D, E, and F) attached to an integral membrane V0 proton pore complex (main component: the proteolipid protein).

In terms of biological role, non-catalytic subunit of the peripheral V1 complex of vacuolar ATPase. V-ATPase is responsible for acidifying a variety of intracellular compartments in eukaryotic cells. The sequence is that of V-type proton ATPase subunit B 1 from Acetabularia acetabulum (Mermaid's wine glass).